A 372-amino-acid polypeptide reads, in one-letter code: MARAHNATLESIQYARGTLRLLDQRKLPLETVFDEILTVDDIWTAIKEMRVRGAPAIAVSAALAIAVAAGNELKKKDGACNSVDGTRRFLLESCDTVMTARPTAVNLSKTLIQLKRDIADVTANTAGGLVEACAVLAEKIYAEDVACNEGIMRHGAAHLTQLVKKSKVSVLTICNTGALATSRYGTALGVVRQLFYEGKLEQVYACETRPWNQGARLTVYECVQENIPCTLICDSAVSALMGSRPIDAVIVGADRICRNGDTANKIGTCNLAVAAAHYGVPFFVAAPSTTLDPMTADGESVVIEERETMELTHSMATQQRVVAEGPSLRIWNPVFDITPAALVTGGIITERGVLQPSATAPFFDITRIVSAS.

The Proton donor role is filled by aspartate 254.

This sequence belongs to the eIF-2B alpha/beta/delta subunits family. MtnA subfamily.

It is found in the cytoplasm. The protein resides in the nucleus. The enzyme catalyses 5-(methylsulfanyl)-alpha-D-ribose 1-phosphate = 5-(methylsulfanyl)-D-ribulose 1-phosphate. It functions in the pathway amino-acid biosynthesis; L-methionine biosynthesis via salvage pathway; L-methionine from S-methyl-5-thio-alpha-D-ribose 1-phosphate: step 1/6. Functionally, catalyzes the interconversion of methylthioribose-1-phosphate (MTR-1-P) into methylthioribulose-1-phosphate (MTRu-1-P). This Trypanosoma cruzi (strain CL Brener) protein is Methylthioribose-1-phosphate isomerase 2.